The sequence spans 184 residues: Secreted protein B (184 aa).

A signal peptide spans 1–19 (MRFILVLVLILGLVSSSFG). Asn-129 carries an N-linked (GlcNAc...) asparagine glycan. A Cell attachment site motif is present at residues 164–166 (RGD).

The protein belongs to the Sct family.

The protein localises to the secreted. The sequence is that of Secreted protein B (29C) from Dictyostelium discoideum (Social amoeba).